Here is a 309-residue protein sequence, read N- to C-terminus: Porphobilinogen deaminase (309 aa).

C244 is modified (S-(dipyrrolylmethanemethyl)cysteine).

The protein belongs to the HMBS family. In terms of assembly, monomer. Dipyrromethane serves as cofactor.

The catalysed reaction is 4 porphobilinogen + H2O = hydroxymethylbilane + 4 NH4(+). Its pathway is porphyrin-containing compound metabolism; protoporphyrin-IX biosynthesis; coproporphyrinogen-III from 5-aminolevulinate: step 2/4. Tetrapolymerization of the monopyrrole PBG into the hydroxymethylbilane pre-uroporphyrinogen in several discrete steps. The protein is Porphobilinogen deaminase of Listeria monocytogenes serotype 4b (strain CLIP80459).